We begin with the raw amino-acid sequence, 739 residues long: Cleavage and polyadenylation specificity factor subunit 2 (739 aa).

Basic and acidic residues predominate over residues 411-423 (VKEEETKASHGSD). Residues 411–430 (VKEEETKASHGSDDNSSEPM) form a disordered region.

The protein belongs to the metallo-beta-lactamase superfamily. RNA-metabolizing metallo-beta-lactamase-like family. CPSF2/YSH1 subfamily. In terms of assembly, component of the CPSF complex, at least composed of CPSF160, CPSF100, CPSF73-I, CPSF73-II, CPSF30, FY and FIPS5. Forms a complex with cleavage and polyadenylation specificity factor (CPSF) subunits FY, PAPS2, CSTF50, CPSF30, CPSF73-I, CPSF73-II and CPSF160.

Its subcellular location is the nucleus. The protein resides in the cytoplasm. In terms of biological role, CPSF plays a key role in pre-mRNA 3'-end formation, recognizing the AAUAAA signal sequence and interacting with poly(A)polymerase and other factors to bring about cleavage and poly(A) addition. Required for antisense-RNA-mediated gene silencing. The chain is Cleavage and polyadenylation specificity factor subunit 2 (CPSF100) from Arabidopsis thaliana (Mouse-ear cress).